A 247-amino-acid polypeptide reads, in one-letter code: Auxin-responsive protein IAA13 (247 aa).

The EAR-like (transcriptional repression) signature appears at 14–18 (LELGL). Residues 25–40 (GTAAKIGKSGGGGAWG) are compositionally biased toward gly residues. Disordered regions lie at residues 25 to 44 (GTAA…ERGR) and 49 to 119 (KDFP…PKDV). The span at 62 to 75 (SASHAGSSPPRSSS) shows a compositional bias: low complexity. Residues 87 to 98 (RMNSLVNNQATK) show a composition bias toward polar residues. Positions 106 to 119 (AGKKKVKDDEPKDV) are enriched in basic and acidic residues. The PB1 domain maps to 129-225 (VGFIKVNMDG…SVKRLRVMKT (97 aa)).

Belongs to the Aux/IAA family. In terms of assembly, homodimers and heterodimers. Interacts with TPL. Preferentially expressed in stems.

It is found in the nucleus. Aux/IAA proteins are short-lived transcriptional factors that function as repressors of early auxin response genes at low auxin concentrations. Repression is thought to result from the interaction with auxin response factors (ARFs), proteins that bind to the auxin-responsive promoter element (AuxRE). Formation of heterodimers with ARF proteins may alter their ability to modulate early auxin response genes expression. The protein is Auxin-responsive protein IAA13 (IAA13) of Arabidopsis thaliana (Mouse-ear cress).